A 126-amino-acid polypeptide reads, in one-letter code: MSGRGKGAKAKGKAKSRSSRAGLQFPVGRVHRFLRKGNYANRVGAGAPVYLAAVLEYLAAEILELAGNAARDNKKTRIIPRHLQLAIRNDEELNKLLGGVTIAQGGVLPNIQAVLLPKKTGSKSSK.

The segment covering 1–18 (MSGRGKGAKAKGKAKSRS) has biased composition (basic residues). The segment at 1 to 21 (MSGRGKGAKAKGKAKSRSSRA) is disordered. Serine 2 carries the post-translational modification N-acetylserine. The residue at position 2 (serine 2) is a Phosphoserine. Glutamine 104 is modified (N5-methylglutamine). Residue lysine 119 forms a Glycyl lysine isopeptide (Lys-Gly) (interchain with G-Cter in ubiquitin) linkage.

Belongs to the histone H2A family. In terms of assembly, the nucleosome is a histone octamer containing two molecules each of H2A, H2B, H3 and H4 assembled in one H3-H4 heterotetramer and two H2A-H2B heterodimers. The octamer wraps approximately 147 bp of DNA. In terms of processing, monoubiquitination of Lys-119 gives a specific tag for epigenetic transcriptional repression. Phosphorylation of Ser-2 directly represses transcription.

Its subcellular location is the nucleus. The protein localises to the chromosome. Its function is as follows. Core component of nucleosome. Nucleosomes wrap and compact DNA into chromatin, limiting DNA accessibility to the cellular machineries which require DNA as a template. Histones thereby play a central role in transcription regulation, DNA repair, DNA replication and chromosomal stability. DNA accessibility is regulated via a complex set of post-translational modifications of histones, also called histone code, and nucleosome remodeling. The sequence is that of Late histone H2A.3, gonadal from Psammechinus miliaris (Green sea urchin).